We begin with the raw amino-acid sequence, 338 residues long: Bacteriochlorophyllide d C-20 methyltransferase (338 aa).

Position 147 (glutamate 147) interacts with S-adenosyl-L-methionine. Residue histidine 150 participates in substrate binding. S-adenosyl-L-methionine-binding positions include glycine 177, asparagine 200, 227-228 (DI), and 242-243 (CR). The active-site Nucleophile is tyrosine 246. Histidine 290 lines the a bacteriochlorophyll d pocket.

The protein belongs to the class I-like SAM-binding methyltransferase superfamily. Cation-independent O-methyltransferase family. Homodimer.

The catalysed reaction is a bacteriochlorophyllide d + S-adenosyl-L-methionine = a bacteriochlorophyllide c + S-adenosyl-L-homocysteine + H(+). The protein operates within porphyrin-containing compound metabolism; bacteriochlorophyll biosynthesis (light-independent). Involved in the biosynthesis of the major light-harvesting pigment bacteriochlorophyll c (BChlc), which confers a significant competitive advantage to green sulfur bacteria living at limiting red and near-infrared light intensities. Catalyzes the methylation at the C-20 position of the cyclic tetrapyrrole chlorin of bacteriochlorophyll d (BChld) to produce bacteriochlorophyll c (BChlc) using S-adenosylmethionine (SAM) as a methyl source. In Chlorobaculum tepidum (strain ATCC 49652 / DSM 12025 / NBRC 103806 / TLS) (Chlorobium tepidum), this protein is Bacteriochlorophyllide d C-20 methyltransferase.